Consider the following 185-residue polypeptide: Elongation factor P (185 aa).

It belongs to the elongation factor P family.

The protein localises to the cytoplasm. Its pathway is protein biosynthesis; polypeptide chain elongation. Functionally, involved in peptide bond synthesis. Stimulates efficient translation and peptide-bond synthesis on native or reconstituted 70S ribosomes in vitro. Probably functions indirectly by altering the affinity of the ribosome for aminoacyl-tRNA, thus increasing their reactivity as acceptors for peptidyl transferase. The polypeptide is Elongation factor P (Streptococcus equi subsp. zooepidemicus (strain MGCS10565)).